A 76-amino-acid chain; its full sequence is uncharacterized protein (76 aa).

This is an uncharacterized protein from Treponema pallidum (strain Nichols).